A 279-amino-acid polypeptide reads, in one-letter code: HTH-type transcriptional regulator HdfR (279 aa).

An HTH lysR-type domain is found at M1–T58. The segment at residues F18–R37 is a DNA-binding region (H-T-H motif).

The protein belongs to the LysR transcriptional regulatory family.

Negatively regulates the transcription of the flagellar master operon flhDC by binding to the upstream region of the operon. This chain is HTH-type transcriptional regulator HdfR, found in Escherichia coli O6:K15:H31 (strain 536 / UPEC).